The primary structure comprises 63 residues: Putative alpha-neurotoxin RjAa9 (63 aa).

One can recognise an LCN-type CS-alpha/beta domain in the interval 1 to 60; sequence KEGYPVDWGNCKYECMSDEYCKDLCADRKATSGYCYKLNWSCYCKGLPDDSPIKTPGKCR. 4 disulfide bridges follow: cysteine 11-cysteine 59, cysteine 15-cysteine 35, cysteine 21-cysteine 42, and cysteine 25-cysteine 44.

The protein belongs to the long (4 C-C) scorpion toxin superfamily. Sodium channel inhibitor family. Alpha subfamily. As to expression, expressed by the venom gland.

It localises to the secreted. Its function is as follows. Alpha toxins bind voltage-independently at site-3 of sodium channels (Nav) and inhibits the inactivation of the activated channels, thereby blocking neuronal transmission. This Rhopalurus junceus (Caribbean blue scorpion) protein is Putative alpha-neurotoxin RjAa9.